We begin with the raw amino-acid sequence, 376 residues long: Penicillin V acylase (376 aa).

The signal sequence occupies residues 1–29; sequence MIKNNKRIKSTVCALSLVALTLGSAVSLA. Cys30 acts as the Nucleophile in catalysis.

This sequence belongs to the peptidase C59 family. In terms of assembly, homotetramer. Dimer of dimers.

It localises to the periplasm. It carries out the reaction a penicillin + H2O = 6-aminopenicillanate + a carboxylate. Its activity is regulated as follows. Exhibits uncharacteristic kinetic behavior, showing positive cooperativity coupled with substrate inhibition. Penicillin acylase activity is enhanced in the presence of the reducing agent DTT, indicating active sulfhydryl group in the enzyme. Also shows enhanced activity in presence of organic solvents and detergents. Inhibited largely in presence of Ag(+), Hg(2+) and Cd(2+) ions, which have strong affinities for sulfhydryl groups. Activity is also inhibited by bile salts. Catalyzes the hydrolysis of penicillin V to 6-aminopenicillanate (6-APA). Shows high specificity towards penicillin V. Can use other beta-lactam substrates, including penicillin G, ampicillin, cephalexin, cloxacillin and dicloxacillin, but at a rate less than 10% of that of penicillin V. Does not show any activity with glyco- or tauro-conjugated bile salts. The polypeptide is Penicillin V acylase (Pectobacterium atrosepticum (strain SCRI 1043 / ATCC BAA-672) (Erwinia carotovora subsp. atroseptica)).